Here is a 201-residue protein sequence, read N- to C-terminus: Recombination protein RecR (201 aa).

The segment at 60 to 75 (CHACGNVDTSDPCTIC) adopts a C4-type zinc-finger fold. The 96-residue stretch at 83 to 178 (TTLVVVEDVS…TITRLAHGVP (96 aa)) folds into the Toprim domain.

This sequence belongs to the RecR family.

Its function is as follows. May play a role in DNA repair. It seems to be involved in an RecBC-independent recombinational process of DNA repair. It may act with RecF and RecO. The chain is Recombination protein RecR from Methylorubrum populi (strain ATCC BAA-705 / NCIMB 13946 / BJ001) (Methylobacterium populi).